We begin with the raw amino-acid sequence, 465 residues long: Calcitonin gene-related peptide type 1 receptor (465 aa).

A signal peptide spans 1–17 (MVICLLLCTPTDIFVVA). Residues 18-141 (SPEVNETQEY…HTNEGRMTAM (124 aa)) lie on the Extracellular side of the membrane. Residues Asn-22, Asn-68, Asn-120, and Asn-125 are each glycosylated (N-linked (GlcNAc...) asparagine). Intrachain disulfides connect Cys-50-Cys-76, Cys-67-Cys-107, and Cys-90-Cys-129. The chain crosses the membrane as a helical span at residues 142–166 (NLFYLALIGHGLSLTSLLISLGIFF). Over 167–177 (YFKSLSCQRIT) the chain is Cytoplasmic. The helical transmembrane segment at 178–200 (LHKNLFFSFVLNSVITIIWLTAV) threads the bilayer. Over 201 to 211 (ANNQELVQRNP) the chain is Extracellular. The chain crosses the membrane as a helical span at residues 212 to 240 (TSCKVSQFIHLYLFGCNYFWMLCEGIYLH). The Cytoplasmic segment spans residues 241-254 (TLIVVAVFAEKQHL). The helical transmembrane segment at 255–275 (MWYYLLGWGFPLIPASIHAIA) threads the bilayer. Residues 276–291 (RSYYYNDNCWISSNTS) are Extracellular-facing. N-linked (GlcNAc...) asparagine glycosylation occurs at Asn-289. Residues 292 to 316 (LLYIIHGPICAALLVNLFFLLNIVR) traverse the membrane as a helical segment. Residues 317–331 (VLITKLKVTHQAESS) are Cytoplasmic-facing. Residues 332–353 (LYMKAVRATLILVPLLGIQYVL) form a helical membrane-spanning segment. At 354-368 (LPYKPEGRVSSEIYD) the chain is on the extracellular side. The chain crosses the membrane as a helical span at residues 369–389 (YIMHILMHYQGLLVATIFCFF). At 390-465 (NGEVQGVLRR…SILKSENPFT (76 aa)) the chain is on the cytoplasmic side.

This sequence belongs to the G-protein coupled receptor 2 family.

It localises to the cell membrane. Its function is as follows. May function as G protein-coupled receptor for calcitonin-gene-related peptides and adrenomedullin. Specificity may be modulated by accessory proteins. May activate cAMP-dependent pathway. In Oncorhynchus gorbuscha (Pink salmon), this protein is Calcitonin gene-related peptide type 1 receptor (calcrl).